The sequence spans 205 residues: MEFLWAPLLGLCCSLAAADRHIVFWNSSNPKFREEDYTVHVQLNDYLDIICPHYEDDSVADAAMERYTLYMVEHQEYVACQPQSKDQVRWNCNRPSAKHGPEKLSEKFQRFTPFILGKEFKEGHSYYYISKPIYHQESQCLKLKVTVNGKITHNPQAHVNPQEKRLQADDPEVQVLHSIGYSAAPRLFPLVWAVLLLPLLLLQSQ.

The N-terminal stretch at 1–17 is a signal peptide; it reads MEFLWAPLLGLCCSLAA. The region spanning 18 to 161 is the Ephrin RBD domain; the sequence is ADRHIVFWNS…THNPQAHVNP (144 aa). An N-linked (GlcNAc...) asparagine glycan is attached at N26. Intrachain disulfides connect C51/C92 and C80/C140. The GPI-anchor amidated serine moiety is linked to residue S182. The propeptide at 183-205 is removed in mature form; sequence AAPRLFPLVWAVLLLPLLLLQSQ.

This sequence belongs to the ephrin family. In terms of assembly, monomer. Homodimer. Forms heterodimers with EPHA2. Binds to the receptor tyrosine kinases EPHA2, EPHA3, EPHA4, EPHA5, EPHA6 and EPHA7. Also binds with low affinity to EPHA1. In terms of processing, undergoes proteolysis by a metalloprotease to give rise to a soluble monomeric form. N-Glycosylation is required for binding to EPHA2 receptor and inducing its internalization. As to expression, expressed in myogenic progenitor cells.

The protein resides in the cell membrane. The protein localises to the secreted. Functionally, cell surface GPI-bound ligand for Eph receptors, a family of receptor tyrosine kinases which are crucial for migration, repulsion and adhesion during neuronal, vascular and epithelial development. Binds promiscuously Eph receptors residing on adjacent cells, leading to contact-dependent bidirectional signaling into neighboring cells. Plays an important role in angiogenesis and tumor neovascularization. The recruitment of VAV2, VAV3 and PI3-kinase p85 subunit by phosphorylated EPHA2 is critical for EFNA1-induced RAC1 GTPase activation and vascular endothelial cell migration and assembly. Exerts anti-oncogenic effects in tumor cells through activation and down-regulation of EPHA2. Activates EPHA2 by inducing tyrosine phosphorylation which leads to its internalization and degradation. Acts as a negative regulator in the tumorigenesis of gliomas by down-regulating EPHA2 and FAK. Can evoke collapse of embryonic neuronal growth cone and regulates dendritic spine morphogenesis. The sequence is that of Ephrin-A1 (Efna1) from Mus musculus (Mouse).